Here is a 99-residue protein sequence, read N- to C-terminus: NADH-quinone oxidoreductase subunit K (99 aa).

Helical transmembrane passes span 3–23, 28–48, and 59–79; these read PANY…GVLV, IVVF…LVTF, and IMAF…LAII.

It belongs to the complex I subunit 4L family. As to quaternary structure, NDH-1 is composed of 14 different subunits. Subunits NuoA, H, J, K, L, M, N constitute the membrane sector of the complex.

The protein resides in the cell membrane. It catalyses the reaction a quinone + NADH + 5 H(+)(in) = a quinol + NAD(+) + 4 H(+)(out). In terms of biological role, NDH-1 shuttles electrons from NADH, via FMN and iron-sulfur (Fe-S) centers, to quinones in the respiratory chain. The immediate electron acceptor for the enzyme in this species is believed to be a menaquinone. Couples the redox reaction to proton translocation (for every two electrons transferred, four hydrogen ions are translocated across the cytoplasmic membrane), and thus conserves the redox energy in a proton gradient. In Frankia casuarinae (strain DSM 45818 / CECT 9043 / HFP020203 / CcI3), this protein is NADH-quinone oxidoreductase subunit K.